The primary structure comprises 251 residues: MAPAPDPAPAGSAAPDPASAPQGLPAASLLQLIWLASPALPVGGFSYSEGLEIAVECAGVTNESAAAAWLQEQLMLTQARGDLAVVHQALAAWRAGDAERVRALNDWVLHTRETSELRLQTEQMGRSLADWLRNQHAGDAEALSDVARLAALPPTYPVAFALAAARTQARAEDVLLACAFGWAENMVQAAIKAVPLGQSAGQRILARLAAAIPGAVAHAMQLGEAERQAFSPMLAVLSARHETQYSRLFRS.

A disordered region spans residues methionine 1–alanine 20. Low complexity predominate over residues proline 9–alanine 20.

Belongs to the UreF family. In terms of assembly, ureD, UreF and UreG form a complex that acts as a GTP-hydrolysis-dependent molecular chaperone, activating the urease apoprotein by helping to assemble the nickel containing metallocenter of UreC. The UreE protein probably delivers the nickel.

Its subcellular location is the cytoplasm. Functionally, required for maturation of urease via the functional incorporation of the urease nickel metallocenter. The polypeptide is Urease accessory protein UreF (Paracidovorax citrulli (strain AAC00-1) (Acidovorax citrulli)).